We begin with the raw amino-acid sequence, 37 residues long: Large ribosomal subunit protein bL36 (37 aa).

Belongs to the bacterial ribosomal protein bL36 family.

The sequence is that of Large ribosomal subunit protein bL36 from Leptospira biflexa serovar Patoc (strain Patoc 1 / Ames).